Here is a 638-residue protein sequence, read N- to C-terminus: tRNA uridine 5-carboxymethylaminomethyl modification enzyme MnmG (638 aa).

FAD contacts are provided by residues 15–20 (GAGHAG), Ile127, and Ser182. NAD(+) is bound at residue 276-290 (GPRYCPSIEDKIVRF). Gln373 contacts FAD.

Belongs to the MnmG family. In terms of assembly, homodimer. Heterotetramer of two MnmE and two MnmG subunits. FAD serves as cofactor.

Its subcellular location is the cytoplasm. In terms of biological role, NAD-binding protein involved in the addition of a carboxymethylaminomethyl (cmnm) group at the wobble position (U34) of certain tRNAs, forming tRNA-cmnm(5)s(2)U34. This is tRNA uridine 5-carboxymethylaminomethyl modification enzyme MnmG from Streptococcus suis (strain 98HAH33).